Reading from the N-terminus, the 285-residue chain is Urease accessory protein UreD (285 aa).

Belongs to the UreD family. UreD, UreF and UreG form a complex that acts as a GTP-hydrolysis-dependent molecular chaperone, activating the urease apoprotein by helping to assemble the nickel containing metallocenter of UreC. The UreE protein probably delivers the nickel.

The protein resides in the cytoplasm. Required for maturation of urease via the functional incorporation of the urease nickel metallocenter. This Citrobacter koseri (strain ATCC BAA-895 / CDC 4225-83 / SGSC4696) protein is Urease accessory protein UreD.